Consider the following 473-residue polypeptide: Cardiolipin synthase C (473 aa).

2 consecutive PLD phosphodiesterase domains span residues 125–152 (LNRRMHNKSFTVDGVVTLVGGRNIGDAY) and 364–391 (SGASLHAKTFSIDGKTVFIGSFNFDPRS). Residues His-130, Lys-132, Asp-137, His-369, Lys-371, and Asp-376 contribute to the active site.

This sequence belongs to the phospholipase D family. Cardiolipin synthase subfamily. ClsC sub-subfamily.

The enzyme catalyses a 1,2-diacyl-sn-glycero-3-phospho-(1'-sn-glycerol) + a 1,2-diacyl-sn-glycero-3-phosphoethanolamine = a cardiolipin + ethanolamine. With respect to regulation, full activity requires coexpression with the neighboring gene ymdB. Catalyzes the synthesis of cardiolipin (CL) (diphosphatidylglycerol) from phosphatidylglycerol (PG) and phosphatidylethanolamine (PE). The polypeptide is Cardiolipin synthase C (Escherichia coli (strain K12)).